The following is a 266-amino-acid chain: Glucosamine-6-phosphate deaminase (266 aa).

D72 serves as the catalytic Proton acceptor; for enolization step. The For ring-opening step role is filled by D141. H143 (proton acceptor; for ring-opening step) is an active-site residue. E148 serves as the catalytic For ring-opening step.

This sequence belongs to the glucosamine/galactosamine-6-phosphate isomerase family. NagB subfamily. In terms of assembly, homohexamer.

It catalyses the reaction alpha-D-glucosamine 6-phosphate + H2O = beta-D-fructose 6-phosphate + NH4(+). It participates in amino-sugar metabolism; N-acetylneuraminate degradation; D-fructose 6-phosphate from N-acetylneuraminate: step 5/5. Its activity is regulated as follows. Allosterically activated by N-acetylglucosamine 6-phosphate (GlcNAc6P). Catalyzes the reversible isomerization-deamination of glucosamine 6-phosphate (GlcN6P) to form fructose 6-phosphate (Fru6P) and ammonium ion. This is Glucosamine-6-phosphate deaminase from Cronobacter sakazakii (strain ATCC BAA-894) (Enterobacter sakazakii).